The chain runs to 279 residues: Large ribosomal subunit protein uL2 (279 aa).

Residues 227-279 (GVAMNPVDHPMGGGEGKTSGGRHPVSPWGFPTKGKKTRDPNKLSSKFIKSKKR) form a disordered region.

It belongs to the universal ribosomal protein uL2 family. Part of the 50S ribosomal subunit. Forms a bridge to the 30S subunit in the 70S ribosome.

Its function is as follows. One of the primary rRNA binding proteins. Required for association of the 30S and 50S subunits to form the 70S ribosome, for tRNA binding and peptide bond formation. It has been suggested to have peptidyltransferase activity; this is somewhat controversial. Makes several contacts with the 16S rRNA in the 70S ribosome. The protein is Large ribosomal subunit protein uL2 of Neorickettsia sennetsu (strain ATCC VR-367 / Miyayama) (Ehrlichia sennetsu).